Reading from the N-terminus, the 474-residue chain is Hepatocyte nuclear factor 4-alpha (474 aa).

The segment at residues 57-132 (SALCAICGDR…AGMKKEAVQN (76 aa)) is a DNA-binding region (nuclear receptor). 2 NR C4-type zinc fingers span residues 60-80 (CAICGDRATGKHYGASSCDGC) and 96-120 (CRFSRQCVVDKDKRNQCRYCRLKKC). Ser-142 and Ser-143 each carry phosphoserine. Phosphotyrosine is present on Tyr-144. Residues 147-377 (SSLPSINALL…NLLQEMLLGG (231 aa)) form the NR LBD domain. Thr-166 carries the post-translational modification Phosphothreonine. The residue at position 167 (Ser-167) is a Phosphoserine. Glycyl lysine isopeptide (Lys-Gly) (interchain with G-Cter in ubiquitin) cross-links involve residues Lys-234 and Lys-307. Ser-313 carries the phosphoserine; by AMPK modification. Positions 368 to 376 (NLLQEMLLG) match the 9aaTAD motif. Residues 413–450 (SNGQMCEWPRPRGQAATPETPQPSPPSGSGSESYKLLP) form a disordered region. Phosphothreonine is present on residues Thr-429 and Thr-432. A Phosphoserine modification is found at Ser-436. Lys-458 is subject to N6-acetyllysine.

This sequence belongs to the nuclear hormone receptor family. NR2 subfamily. In terms of assembly, homodimerization is required for HNF4-alpha to bind to its recognition site. Interacts with CLOCK, BMAL1 and PER1. Interacts with PER2. Interacts with CRY1 and CRY2. Interacts with NR0B2/SHP; the resulting heterodimer is transcriptionally inactive. Interacts with DDX3X; this interaction disrupts the interaction between HNF4 and NR0B2 that forms inactive heterodimers and enhances the formation of active HNF4 homodimers. Phosphorylated on tyrosine residue(s); phosphorylation is important for its DNA-binding activity. Phosphorylation may directly or indirectly play a regulatory role in the subnuclear distribution. Phosphorylation at Ser-313 by AMPK reduces the ability to form homodimers and bind DNA. Post-translationally, acetylation at Lys-458 lowers transcriptional activation by about two-fold. Expressed in the liver, pancreas and colon in a circadian manner.

It is found in the nucleus. Functionally, transcriptional regulator which controls the expression of hepatic genes during the transition of endodermal cells to hepatic progenitor cells, facilitatating the recruitment of RNA pol II to the promoters of target genes. Activates the transcription of CYP2C38. Represses the CLOCK-BMAL1 transcriptional activity and is essential for circadian rhythm maintenance and period regulation in the liver and colon cells. In Mus musculus (Mouse), this protein is Hepatocyte nuclear factor 4-alpha (Hnf4a).